Here is a 495-residue protein sequence, read N- to C-terminus: MASGILLNVKEEVTCPICLELLTEPLSLPCGHSFCQACITANHKKSMLYKEEERSCPVCRISYQPENIQPNRHVANIVEKLREVKLSPEEGQKVDHCARHGEKLLLFCQEDRKVICWLCERSQEHRGHHTFLMEEVAQEYHVKLQTALEMLRQKQQEAEKLEADIREEKASWKIQIDYDKTNVLADFEQLREILDWEESNELQYLEKEEEDILKSLTKSETKMVRQTQYVRELISDLEHRLQGSMMELLQGVDGIIKRIENMTLKKPETFHKNQRRVFRAPALKGMLDMFRELTDVRRYWVDVTLAPNNISHVVIAEDKRQVSSRNPQIMYWAQGKLFQSLKNFNYCTGILGSQSITSGKHYWEVDVSKKSAWILGVCAGFQPDAMYDVEQNENYQPKYGYWVIGLQEGVKYSVFQDGSSHTPFAPFIAPLSVIFCPDRVGVFVDYEACTVSFFNITNHGFLIYKFSQCSFSKPVFPYLNPRKCTVPMTLCSPSS.

Position 2 is an N-acetylalanine (Ala-2). The RING-type zinc-finger motif lies at 15–60 (CPICLELLTEPLSLPCGHSFCQACITANHKKSMLYKEEERSCPVCR). Ser-87 is subject to Phosphoserine. The B box-type zinc finger occupies 92 to 133 (QKVDHCARHGEKLLLFCQEDRKVICWLCERSQEHRGHHTFLM). The Zn(2+) site is built by Cys-97, His-100, Cys-119, and His-125. Positions 137 to 177 (AQEYHVKLQTALEMLRQKQQEAEKLEADIREEKASWKIQID) form a coiled coil. The tract at residues 187–200 (FEQLREILDWEESN) is required for interaction with GABARAP and for autophagy. Positions 283-495 (LKGMLDMFRE…VPMTLCSPSS (213 aa)) constitute a B30.2/SPRY domain.

Belongs to the TRIM/RBCC family. As to quaternary structure, can form homodimers and homotrimers. In addition to lower-order dimerization, also exhibits a higher-order multimerization and both low- and high-order multimerizations are essential for its restriction activity. Interacts with BTBD1 and BTBD2. Interacts with PSMC4, PSMC5, PSMD7 and HSPA8/HSC70. Interacts (via B30.2/SPRY domain) with HSPA1A/B. Interacts with PSMC2, MAP3K7/TAK1, TAB2 and TAB3. Interacts with SQSTM1. Interacts with TRIM6 and TRIM34. Interacts with ULK1 (phosphorylated form), GABARAP, GABARAPL1, GABARAPL2, MAP1LC3A, MAP1LC3C and BECN1. Post-translationally, degraded in a proteasome-independent fashion in the absence of viral infection but in a proteasome-dependent fashion following exposure to restriction sensitive virus. Autoubiquitinated in a RING finger- and UBE2D2-dependent manner. Monoubiquitinated by TRIM21. Deubiquitinated by Yersinia YopJ. Ubiquitination may not lead to proteasomal degradation.

It localises to the cytoplasm. The protein resides in the nucleus. The enzyme catalyses S-ubiquitinyl-[E2 ubiquitin-conjugating enzyme]-L-cysteine + [acceptor protein]-L-lysine = [E2 ubiquitin-conjugating enzyme]-L-cysteine + N(6)-ubiquitinyl-[acceptor protein]-L-lysine.. It functions in the pathway protein modification; protein ubiquitination. Capsid-specific restriction factor that prevents infection from non-host-adapted retroviruses. Blocks viral replication early in the life cycle, after viral entry but before reverse transcription. In addition to acting as a capsid-specific restriction factor, also acts as a pattern recognition receptor that activates innate immune signaling in response to the retroviral capsid lattice. Binding to the viral capsid triggers its E3 ubiquitin ligase activity, and in concert with the heterodimeric ubiquitin conjugating enzyme complex UBE2V1-UBE2N (also known as UBC13-UEV1A complex) generates 'Lys-63'-linked polyubiquitin chains, which in turn are catalysts in the autophosphorylation of the MAP3K7/TAK1 complex (includes TAK1, TAB2, and TAB3). Activation of the MAP3K7/TAK1 complex by autophosphorylation results in the induction and expression of NF-kappa-B and MAPK-responsive inflammatory genes, thereby leading to an innate immune response in the infected cell. Plays a role in regulating autophagy through activation of autophagy regulator BECN1 by causing its dissociation from its inhibitors BCL2 and TAB2. This Erythrocebus patas (Red guenon) protein is Tripartite motif-containing protein 5 (TRIM5).